Here is a 254-residue protein sequence, read N- to C-terminus: Protein Thf1 (254 aa).

Positions 183–217 form a coiled coil; that stretch reads SDKLQKDLDLYRSNLEKMEQARITMEEAIQADRRK. The segment covering 213–227 has biased composition (basic and acidic residues); sequence ADRRKREQREQEKLA. Residues 213–254 form a disordered region; that stretch reads ADRRKREQREQEKLAKAAAAEAPAALEASSDNPEPETSETPS. The segment covering 228–240 has biased composition (low complexity); it reads KAAAAEAPAALEA. The segment covering 245–254 has biased composition (acidic residues); that stretch reads PEPETSETPS.

It belongs to the THF1 family.

May be involved in photosynthetic membrane biogenesis. The polypeptide is Protein Thf1 (Synechococcus elongatus (strain ATCC 33912 / PCC 7942 / FACHB-805) (Anacystis nidulans R2)).